Reading from the N-terminus, the 547-residue chain is Chaperonin GroEL (547 aa).

Residues 30–33, Lys51, 87–91, Gly415, 479–481, and Asp495 each bind ATP; these read TLGP, DGTTT, and NAA.

Belongs to the chaperonin (HSP60) family. In terms of assembly, forms a cylinder of 14 subunits composed of two heptameric rings stacked back-to-back. Interacts with the co-chaperonin GroES.

The protein resides in the cytoplasm. The enzyme catalyses ATP + H2O + a folded polypeptide = ADP + phosphate + an unfolded polypeptide.. Functionally, together with its co-chaperonin GroES, plays an essential role in assisting protein folding. The GroEL-GroES system forms a nano-cage that allows encapsulation of the non-native substrate proteins and provides a physical environment optimized to promote and accelerate protein folding. The protein is Chaperonin GroEL of Pseudomonas aeruginosa (strain UCBPP-PA14).